Reading from the N-terminus, the 466-residue chain is Asparagine--tRNA ligase (466 aa).

The protein belongs to the class-II aminoacyl-tRNA synthetase family. Homodimer.

The protein localises to the cytoplasm. It carries out the reaction tRNA(Asn) + L-asparagine + ATP = L-asparaginyl-tRNA(Asn) + AMP + diphosphate + H(+). The chain is Asparagine--tRNA ligase from Shewanella sp. (strain ANA-3).